The following is a 175-amino-acid chain: MPKFLDAVAGFGVTFGSMFKKPVTEEYPEKPGPVAKRYHGRHQLNRYADGLEKCIGCELCAWACPADAIFVEGADNTEAERYSPGERYGRVYQINYLRCIGCGLCIEACPTRALTMTNDYEMADDNRADLIYGKDKLLAPLEPGMGAPPHAMAPGATDEDYYRGTVSPSAEADAR.

2 consecutive 4Fe-4S ferredoxin-type domains span residues 44–74 and 90–119; these read LNRYADGLEKCIGCELCAWACPADAIFVEGA and RVYQINYLRCIGCGLCIEACPTRALTMTND. Cys-54, Cys-57, Cys-60, Cys-64, Cys-99, Cys-102, Cys-105, and Cys-109 together coordinate [4Fe-4S] cluster. Positions 148-175 are disordered; it reads PPHAMAPGATDEDYYRGTVSPSAEADAR.

It belongs to the complex I 23 kDa subunit family. NDH-1 is composed of 14 different subunits. Subunits NuoA, H, J, K, L, M, N constitute the membrane sector of the complex. [4Fe-4S] cluster serves as cofactor.

Its subcellular location is the cell membrane. It catalyses the reaction a quinone + NADH + 5 H(+)(in) = a quinol + NAD(+) + 4 H(+)(out). In terms of biological role, NDH-1 shuttles electrons from NADH, via FMN and iron-sulfur (Fe-S) centers, to quinones in the respiratory chain. The immediate electron acceptor for the enzyme in this species is believed to be menaquinone. Couples the redox reaction to proton translocation (for every two electrons transferred, four hydrogen ions are translocated across the cytoplasmic membrane), and thus conserves the redox energy in a proton gradient. The protein is NADH-quinone oxidoreductase subunit I of Mycolicibacterium gilvum (strain PYR-GCK) (Mycobacterium gilvum (strain PYR-GCK)).